Consider the following 898-residue polypeptide: Serine/threonine-protein kinase TAO3 (898 aa).

Residues 24 to 277 (FIDLHEIGHG…AAELLRHDFI (254 aa)) form the Protein kinase domain. ATP is bound by residues 30-38 (IGHGSFGAV) and Lys-53. Asp-147 functions as the Proton acceptor in the catalytic mechanism. 2 disordered regions span residues 316–372 (TRNG…EVMD) and 405–424 (DEAG…SVQS). Phosphoserine occurs at positions 324, 331, 343, 346, and 349. Residues 349-366 (SIPSVSVSTGSRSSSVNS) are compositionally biased toward low complexity. At Thr-357 the chain carries Phosphothreonine. Ser-359 is subject to Phosphoserine. Positions 405–416 (DEAGHGDPRPEP) are enriched in basic and acidic residues. Phosphoserine is present on Ser-442. 3 coiled-coil regions span residues 452–502 (EQEN…THAN), 548–649 (FLES…HAML), and 753–871 (ILKT…QERE). Residues 565–596 (EEMNEDHSTPKKEKQERISKHKENLQHTQAEE) form a disordered region. Lys-830 carries the post-translational modification N6-acetyllysine.

It belongs to the protein kinase superfamily. STE Ser/Thr protein kinase family. STE20 subfamily. Self-associates. Interacts with ERN1 and TRAF2. Interaction with TRAF2 is facilitated under ER stress conditions, such as treatment with tunicamycin, and may promote TRAF2 phosphorylation. Interacts (via N-terminus) with STK25; the interaction promotes STK25 abundance at the level of protein expression and/or stability. In terms of processing, autophosphorylated. Phosphorylation at Ser-324 by ATM following DNA damage is required for activation of the p38/MAPK14 stress-activated MAPK cascade. Phosphorylated at Ser-324 and on Tyr residues during T cell activation. Phosphorylated by LRRK2. In terms of tissue distribution, ubiquitously expressed, with a higher expression in the retina.

It is found in the cytoplasm. The protein localises to the cell membrane. It localises to the membrane raft. Its subcellular location is the lipid droplet. The enzyme catalyses L-seryl-[protein] + ATP = O-phospho-L-seryl-[protein] + ADP + H(+). It carries out the reaction L-threonyl-[protein] + ATP = O-phospho-L-threonyl-[protein] + ADP + H(+). In terms of biological role, serine/threonine-protein kinase that acts as a regulator of the p38/MAPK14 stress-activated MAPK cascade and of the MAPK8/JNK cascade. In response to DNA damage, involved in the G2/M transition DNA damage checkpoint by activating the p38/MAPK14 stress-activated MAPK cascade, probably by mediating phosphorylation of upstream MAP2K3 and MAP2K6 kinases. Inhibits basal activity of the MAPK8/JNK cascade and diminishes its activation in response to epidermal growth factor (EGF). Positively regulates canonical T cell receptor (TCR) signaling by preventing early PTPN6/SHP1-mediated inactivation of LCK, ensuring sustained TCR signaling that is required for optimal activation and differentiation of T cells. Phosphorylates PTPN6/SHP1 on 'Thr-396', leading to its polyubiquitination and subsequent proteasomal degradation. Required for cell surface expression of metalloprotease ADAM10 on type 1 transitional B cells which is necessary for their NOTCH-mediated development into marginal zone B cells. Also required for the NOTCH-mediated terminal differentiation of splenic conventional type 2 dendritic cells. Positively regulates osteoblast differentiation by acting as an upstream activator of the JNK pathway. Promotes JNK signaling in hepatocytes and positively regulates hepatocyte lipid storage by inhibiting beta-oxidation and triacylglycerol secretion while enhancing lipid synthesis. Restricts age-associated inflammation by negatively regulating differentiation of macrophages and their production of pro-inflammatory cytokines. Plays a role in negatively regulating the abundance of regulatory T cells in white adipose tissue. This chain is Serine/threonine-protein kinase TAO3 (Taok3), found in Rattus norvegicus (Rat).